We begin with the raw amino-acid sequence, 136 residues long: Large ribosomal subunit protein uL16 (136 aa).

Belongs to the universal ribosomal protein uL16 family. Part of the 50S ribosomal subunit.

Functionally, binds 23S rRNA and is also seen to make contacts with the A and possibly P site tRNAs. The sequence is that of Large ribosomal subunit protein uL16 from Vibrio atlanticus (strain LGP32) (Vibrio splendidus (strain Mel32)).